The following is a 233-amino-acid chain: Orotidine 5'-phosphate decarboxylase (233 aa).

Substrate contacts are provided by residues Asp-12, Lys-34, 61–70 (DWKLHDIGAT), Thr-116, Arg-181, Gln-190, Gly-210, and Arg-211. The Proton donor role is filled by Lys-63.

The protein belongs to the OMP decarboxylase family. Type 1 subfamily. Homodimer.

The enzyme catalyses orotidine 5'-phosphate + H(+) = UMP + CO2. It functions in the pathway pyrimidine metabolism; UMP biosynthesis via de novo pathway; UMP from orotate: step 2/2. Its function is as follows. Catalyzes the decarboxylation of orotidine 5'-monophosphate (OMP) to uridine 5'-monophosphate (UMP). The polypeptide is Orotidine 5'-phosphate decarboxylase (Caulobacter vibrioides (strain ATCC 19089 / CIP 103742 / CB 15) (Caulobacter crescentus)).